Reading from the N-terminus, the 150-residue chain is Galectin-1 (150 aa).

In terms of domain architecture, Galectin spans 9–141; sequence NQIKLQDDFK…FSSPVTVDIH (133 aa). A carbohydrate-binding residues include histidine 51, arginine 55, asparagine 64, and glutamate 75.

In terms of assembly, homotetramer. Oligomerization is required for carbohydrate binding. As to expression, most abundant in fruiting bodies. Very low levels of expression in asexual vegetative mycelia.

It localises to the secreted. The protein resides in the extracellular space. Its subcellular location is the extracellular matrix. It is found in the cell wall. The protein localises to the endomembrane system. Its function is as follows. Binds lactose. May play a role in fruiting body formation. The polypeptide is Galectin-1 (Cgl1) (Coprinopsis cinerea (strain Okayama-7 / 130 / ATCC MYA-4618 / FGSC 9003) (Inky cap fungus)).